The chain runs to 160 residues: Putative pre-16S rRNA nuclease (160 aa).

The protein belongs to the YqgF nuclease family.

It is found in the cytoplasm. In terms of biological role, could be a nuclease involved in processing of the 5'-end of pre-16S rRNA. The chain is Putative pre-16S rRNA nuclease from Jannaschia sp. (strain CCS1).